The following is a 101-amino-acid chain: UPF0213 protein VC0395_0675/VC395_A0575 (101 aa).

The GIY-YIG domain maps to 9 to 85 (SPWFVYLVRC…KALSKSQKEA (77 aa)).

It belongs to the UPF0213 family.

This is UPF0213 protein VC0395_0675/VC395_A0575 from Vibrio cholerae serotype O1 (strain ATCC 39541 / Classical Ogawa 395 / O395).